The primary structure comprises 126 residues: Large ribosomal subunit protein bL12 (126 aa).

Belongs to the bacterial ribosomal protein bL12 family. Homodimer. Part of the ribosomal stalk of the 50S ribosomal subunit. Forms a multimeric L10(L12)X complex, where L10 forms an elongated spine to which 2 to 4 L12 dimers bind in a sequential fashion. Binds GTP-bound translation factors.

Forms part of the ribosomal stalk which helps the ribosome interact with GTP-bound translation factors. Is thus essential for accurate translation. In Saccharophagus degradans (strain 2-40 / ATCC 43961 / DSM 17024), this protein is Large ribosomal subunit protein bL12.